Reading from the N-terminus, the 237-residue chain is Class B acid phosphatase (237 aa).

The first 25 residues, 1 to 25 (MRKITLALSAACLLFSLNNAVVARA), serve as a signal peptide directing secretion. The active-site Nucleophile is the Asp-69. Positions 69 and 71 each coordinate Mg(2+). The active-site Proton donor is the Asp-71. Residues 137-138 (TG) and Lys-177 contribute to the substrate site. Asp-192 lines the Mg(2+) pocket.

It belongs to the class B bacterial acid phosphatase family. Homotetramer. Mg(2+) is required as a cofactor.

The protein resides in the periplasm. It catalyses the reaction a phosphate monoester + H2O = an alcohol + phosphate. Functionally, dephosphorylates several organic phosphate monoesters. Also has a phosphotransferase activity catalyzing the transfer of low-energy phosphate groups from organic phosphate monoesters to free hydroxyl groups of various organic compounds. The chain is Class B acid phosphatase from Enterobacter sp. (strain 638).